Reading from the N-terminus, the 740-residue chain is Catalase-peroxidase (740 aa).

The disordered stretch occupies residues 1–32 (MPEDRPIEDSPPIGEAQTDAPAGGCPAGFGRI). A cross-link (tryptophyl-tyrosyl-methioninium (Trp-Tyr) (with M-263)) is located at residues 113–237 (WHAAGTYRVS…LAAVQMGLIY (125 aa)). Catalysis depends on His-114, which acts as the Proton acceptor. The segment at residues 237 to 263 (YVNPEGPNGNPDPQASAIDIRETFGRM) is a cross-link (tryptophyl-tyrosyl-methioninium (Tyr-Met) (with W-113)). His-278 lines the heme b pocket.

This sequence belongs to the peroxidase family. Peroxidase/catalase subfamily. As to quaternary structure, homodimer or homotetramer. It depends on heme b as a cofactor. Formation of the three residue Trp-Tyr-Met cross-link is important for the catalase, but not the peroxidase activity of the enzyme.

The enzyme catalyses H2O2 + AH2 = A + 2 H2O. It catalyses the reaction 2 H2O2 = O2 + 2 H2O. Bifunctional enzyme with both catalase and broad-spectrum peroxidase activity. May play a role in the intracellular survival of mycobacteria. The sequence is that of Catalase-peroxidase from Mycolicibacterium smegmatis (Mycobacterium smegmatis).